A 288-amino-acid polypeptide reads, in one-letter code: Shikimate dehydrogenase (NADP(+)) (288 aa).

Shikimate is bound by residues 22 to 24 (SLS) and Thr69. Catalysis depends on Lys73, which acts as the Proton acceptor. Shikimate is bound by residues Asn94 and Asp110. Residues 131–135 (GSGGA) and Leu228 each bind NADP(+). A shikimate-binding site is contributed by Tyr230. Position 251 (Gly251) interacts with NADP(+).

The protein belongs to the shikimate dehydrogenase family. As to quaternary structure, homodimer.

It catalyses the reaction shikimate + NADP(+) = 3-dehydroshikimate + NADPH + H(+). The protein operates within metabolic intermediate biosynthesis; chorismate biosynthesis; chorismate from D-erythrose 4-phosphate and phosphoenolpyruvate: step 4/7. Functionally, involved in the biosynthesis of the chorismate, which leads to the biosynthesis of aromatic amino acids. Catalyzes the reversible NADPH linked reduction of 3-dehydroshikimate (DHSA) to yield shikimate (SA). The chain is Shikimate dehydrogenase (NADP(+)) from Synechococcus sp. (strain JA-2-3B'a(2-13)) (Cyanobacteria bacterium Yellowstone B-Prime).